The primary structure comprises 512 residues: D-alanine--D-alanyl carrier protein ligase (512 aa).

152–153 is an ATP binding site; sequence TS. Residue Asp199 coordinates D-alanine. 294–299 is a binding site for ATP; that stretch reads NAYGPT. Val303 is a binding site for D-alanine. ATP-binding positions include Asp385, 397 to 400, and Lys499; that span reads YGGR. Position 499 (Lys499) interacts with D-alanine.

The protein belongs to the ATP-dependent AMP-binding enzyme family. DltA subfamily.

The protein localises to the cytoplasm. The enzyme catalyses holo-[D-alanyl-carrier protein] + D-alanine + ATP = D-alanyl-[D-alanyl-carrier protein] + AMP + diphosphate. It participates in cell wall biogenesis; lipoteichoic acid biosynthesis. Catalyzes the first step in the D-alanylation of lipoteichoic acid (LTA), the activation of D-alanine and its transfer onto the D-alanyl carrier protein (Dcp) DltC. In an ATP-dependent two-step reaction, forms a high energy D-alanyl-AMP intermediate, followed by transfer of the D-alanyl residue as a thiol ester to the phosphopantheinyl prosthetic group of the Dcp. D-alanylation of LTA plays an important role in modulating the properties of the cell wall in Gram-positive bacteria, influencing the net charge of the cell wall. In Streptococcus pyogenes serotype M28 (strain MGAS6180), this protein is D-alanine--D-alanyl carrier protein ligase.